Reading from the N-terminus, the 327-residue chain is RNA ligase 1 (327 aa).

Mg(2+) serves as cofactor. The cofactor is Mn(2+). AMPylates itself (auto-AMPylation).

It catalyses the reaction ATP + (ribonucleotide)n-3'-hydroxyl + 5'-phospho-(ribonucleotide)m = (ribonucleotide)n+m + AMP + diphosphate.. In terms of biological role, functions as an RNA ligase, in vitro. The ligation reaction entails three nucleotidyl transfer steps. In the first step, the RNA ligase reacts with ATP in the absence of nucleic acid to form a covalent ligase-AMP intermediate and release pyrophosphate. In step 2, the ligase-AMP binds to the nucleic acid and transfers the adenylate to the 5'-PO4 terminus to form an adenylylated intermediate. In step 3, the RNA ligase directs the attack of the 3'-OH on the 5'-phosphoanhydride linkage, resulting in a repaired 3'-5' phosphodiester and release of AMP. Exhibits selectivity for single-stranded RNA substrates and may not have nick-sealing activity on double-stranded DNA-RNA hybrids. May play a role in maintaining RNA integrity under stress conditions, for example in response to reactive oxygen species (ROS). The sequence is that of RNA ligase 1 from Mus musculus (Mouse).